Here is a 282-residue protein sequence, read N- to C-terminus: Diaminopimelate epimerase (282 aa).

Residues Asn13, Gln45, and Asn64 each contribute to the substrate site. The Proton donor role is filled by Cys73. Residues 74–75 (GN), Asn155, Asn189, and 207–208 (ER) each bind substrate. The active-site Proton acceptor is the Cys216. 217-218 (GS) is a binding site for substrate.

The protein belongs to the diaminopimelate epimerase family. In terms of assembly, homodimer.

The protein localises to the cytoplasm. It carries out the reaction (2S,6S)-2,6-diaminopimelate = meso-2,6-diaminopimelate. It participates in amino-acid biosynthesis; L-lysine biosynthesis via DAP pathway; DL-2,6-diaminopimelate from LL-2,6-diaminopimelate: step 1/1. Catalyzes the stereoinversion of LL-2,6-diaminopimelate (L,L-DAP) to meso-diaminopimelate (meso-DAP), a precursor of L-lysine and an essential component of the bacterial peptidoglycan. The sequence is that of Diaminopimelate epimerase from Bartonella bacilliformis (strain ATCC 35685 / KC583 / Herrer 020/F12,63).